The following is a 428-amino-acid chain: Enolase (428 aa).

Gln-163 contributes to the (2R)-2-phosphoglycerate binding site. Glu-205 acts as the Proton donor in catalysis. 3 residues coordinate Mg(2+): Asp-242, Glu-286, and Asp-313. (2R)-2-phosphoglycerate contacts are provided by Lys-338, Arg-367, Ser-368, and Lys-389. Residue Lys-338 is the Proton acceptor of the active site.

Belongs to the enolase family. Mg(2+) is required as a cofactor.

The protein resides in the cytoplasm. It localises to the secreted. Its subcellular location is the cell surface. It carries out the reaction (2R)-2-phosphoglycerate = phosphoenolpyruvate + H2O. It functions in the pathway carbohydrate degradation; glycolysis; pyruvate from D-glyceraldehyde 3-phosphate: step 4/5. Functionally, catalyzes the reversible conversion of 2-phosphoglycerate (2-PG) into phosphoenolpyruvate (PEP). It is essential for the degradation of carbohydrates via glycolysis. This chain is Enolase, found in Acidovorax ebreus (strain TPSY) (Diaphorobacter sp. (strain TPSY)).